The sequence spans 1012 residues: Formate dehydrogenase subunit alpha (1012 aa).

Positions 1-35 (MLIKRRAFLKLTAAGATLSAFGGLGVDLAPAKAQA) form a signal peptide, tat-type signal. The 59-residue stretch at 45–103 (AKQTTSVCCYCSVGCGLIVHTDKKTNRAINVEGDPDHPINEGSLCAKGASTWQLAENER) folds into the 4Fe-4S Mo/W bis-MGD-type domain. 4 residues coordinate [4Fe-4S] cluster: C52, C55, C59, and C89. U193 is a W-bis(molybdopterin guanine dinucleotide) binding site. U193 is a non-standard amino acid (selenocysteine). Positions 393, 395, 398, 428, and 430 each coordinate Ca(2+). C852 and C879 are oxidised to a cystine.

It belongs to the prokaryotic molybdopterin-containing oxidoreductase family. As to quaternary structure, heterodimer of alpha (FdhA) and beta (FdhB) subunits. [4Fe-4S] cluster is required as a cofactor. The cofactor is W-bis(molybdopterin guanine dinucleotide). The disulfide bond is likely to be broken in the active form of this enzyme. Post-translationally, predicted to be exported by the Tat system. The position of the signal peptide cleavage has been experimentally proven.

It is found in the periplasm. The catalysed reaction is formate + NAD(+) = CO2 + NADH. Alpha chain of the formate dehydrogenase (FDH) catalyze the reversible two-electron oxidation of formate to carbon dioxide. FDH loses activity in the presence of air, but this activity can be restored. The alpha subunit of formate dehydrogenase forms the active site. This is Formate dehydrogenase subunit alpha from Megalodesulfovibrio gigas (Desulfovibrio gigas).